Reading from the N-terminus, the 205-residue chain is Isochorismatase domain-containing protein 2 (205 aa).

2 positions are modified to phosphoserine: Ser-7 and Ser-202.

Belongs to the isochorismatase family. As to quaternary structure, interacts with CDKN2A.

The protein localises to the cytoplasm. Its subcellular location is the nucleus. This is Isochorismatase domain-containing protein 2 (ISOC2) from Homo sapiens (Human).